Consider the following 254-residue polypeptide: Undecaprenyl-diphosphatase (254 aa).

The next 8 helical transmembrane spans lie at 1–21, 41–61, 70–90, 97–117, 134–154, 175–195, 209–229, and 234–254; these read MDIIQAIIIGIIEGFTEFLPI, LTKAYEVIIQFAAILAVMLIY, IDLWMKLLFAFLPLAIVGFIF, LFNVQVVAWMFIIGGIIFLIV, VSWTQAWWVGFAQIFSLIPGT, AEFSFLLAIPVMAVVSGYDLL, FLIGFIVAFIVAYATIKLFLV, and FTFVAFGIYRIIFGIFLLMIL.

The protein belongs to the UppP family.

It localises to the cell inner membrane. The catalysed reaction is di-trans,octa-cis-undecaprenyl diphosphate + H2O = di-trans,octa-cis-undecaprenyl phosphate + phosphate + H(+). Functionally, catalyzes the dephosphorylation of undecaprenyl diphosphate (UPP). Confers resistance to bacitracin. The sequence is that of Undecaprenyl-diphosphatase from Sulfurovum sp. (strain NBC37-1).